The primary structure comprises 225 residues: UPF0758 protein SO_4248 (225 aa).

The MPN domain maps to 102 to 224 (VLTNPDLTRD…IVSFAERGWI (123 aa)). Zn(2+) is bound by residues His-173, His-175, and Asp-186. A JAMM motif motif is present at residues 173–186 (HNHPSGIAEPSQAD).

It belongs to the UPF0758 family.

The polypeptide is UPF0758 protein SO_4248 (Shewanella oneidensis (strain ATCC 700550 / JCM 31522 / CIP 106686 / LMG 19005 / NCIMB 14063 / MR-1)).